The sequence spans 223 residues: Trichome differentiation protein GL1 (223 aa).

2 HTH myb-type domains span residues 11-63 (NQEY…MNYL) and 64-118 (SPNV…SKKL). DNA-binding regions (H-T-H motif) lie at residues 39 to 63 (WNRI…MNYL) and 91 to 114 (WSLI…NTHL).

It is found in the nucleus. In terms of biological role, regulates the production of a signal that induces hair (trichome) precursor cells on leaf primordia to differentiate. This chain is Trichome differentiation protein GL1 (GL1), found in Arabidopsis lyrata (Lyre-leaved rock-cress).